The sequence spans 333 residues: BRISC and BRCA1-A complex member 1 (333 aa).

Met1 carries the N-acetylmethionine modification. Residues 1 to 85 (MEVAEANSPT…PWQVPASASE (85 aa)) are disordered. Ser8 carries the phosphoserine modification. A compositionally biased stretch (acidic residues) spans 10–24 (TEEEEEEEEEGEETI). A phosphoserine mark is found at Ser33 and Ser53. Residues 58–67 (EAATADGGAA) show a composition bias toward low complexity. The VWFA-like stretch occupies residues 99–302 (VIICLDLSEE…LELHNCMAKL (204 aa)).

The protein belongs to the BABAM1 family. Component of the ARISC complex, at least composed of UIMC1/RAP80, ABRAXAS1, BRCC3/BRCC36, BABAM2 and BABAM1/NBA1. Component of the BRCA1-A complex, at least composed of BRCA1, BARD1, UIMC1/RAP80, ABRAXAS1, BRCC3/BRCC36, BABAM2 and BABAM1/NBA1. In the BRCA1-A complex, interacts directly with ABRAXAS1 and BABAM2. Component of the BRISC complex, at least composed of ABRAXAS2, BRCC3/BRCC36, BABAM2 and BABAM1/NBA1. Identified in a complex with SHMT2 and the other subunits of the BRISC complex.

The protein resides in the cytoplasm. The protein localises to the nucleus. Its function is as follows. Component of the BRCA1-A complex, a complex that specifically recognizes 'Lys-63'-linked ubiquitinated histones H2A and H2AX at DNA lesions sites, leading to target the BRCA1-BARD1 heterodimer to sites of DNA damage at double-strand breaks (DSBs). The BRCA1-A complex also possesses deubiquitinase activity that specifically removes 'Lys-63'-linked ubiquitin on histones H2A and H2AX. In the BRCA1-A complex, it is required for the complex integrity and its localization at DSBs. Component of the BRISC complex, a multiprotein complex that specifically cleaves 'Lys-63'-linked ubiquitin in various substrates. In these 2 complexes, it is probably required to maintain the stability of BABAM2 and help the 'Lys-63'-linked deubiquitinase activity mediated by BRCC3/BRCC36 component. The BRISC complex is required for normal mitotic spindle assembly and microtubule attachment to kinetochores via its role in deubiquitinating NUMA1. Plays a role in interferon signaling via its role in the deubiquitination of the interferon receptor IFNAR1; deubiquitination increases IFNAR1 activity by enhancing its stability and cell surface expression. Down-regulates the response to bacterial lipopolysaccharide (LPS) via its role in IFNAR1 deubiquitination. The sequence is that of BRISC and BRCA1-A complex member 1 (Babam1) from Mus musculus (Mouse).